The primary structure comprises 3375 residues: Basement membrane proteoglycan (3375 aa).

The first 22 residues, 1–22 (MKRSSTVLAALLALLLVATNDA), serve as a signal peptide directing secretion. The Ig-like C2-type 1 domain occupies 45–130 (VQITVFPSEK…NTVEARATLS (86 aa)). 11 disulfide bridges follow: C66–C114, C149–C161, C156–C174, C168–C183, C190–C202, C197–C215, C209–C224, C233–C246, C240–C259, C253–C268, and C293–C344. LDL-receptor class A domains follow at residues 148–184 (QCMA…ANCP), 189–225 (TCEP…LNCN), and 232–269 (DCKP…VGCV). The Ig-like C2-type 2 domain maps to 271-355 (PTVVDPPQTN…AINVKGRVLA (85 aa)). Residues 364 to 385 (VDDPRPQPPQPPTAPPQRASCD) form a disordered region. Positions 369–378 (PQPPQPPTAP) are enriched in pro residues. 3 cysteine pairs are disulfide-bonded: C384–C400, C402–C411, and C414–C429. Positions 384 to 431 (CDTRGAVTPYPNNYGTCECKSQVTGPNCDQCKPGAFHLSEKSPEGCLK) constitute a Laminin EGF-like 1; truncated domain. Residues 432-441 (CFCFGVSNDC) form the Laminin EGF-like 2; first part domain. A Laminin IV type A 1 domain is found at 450-633 (KDRLMFAGDA…PDGLALEVEQ (184 aa)). Intrachain disulfides connect C634/C648, C636/C689, C691/C700, and C703/C718. A Laminin EGF-like 2; second part domain is found at 634 to 666 (CVCPPGYLGTSCEDCAPGYERSGYGPYLGTCVP). Residues 674-720 (CGPGAVAPTAPAQGQCQCKASVIGPNCDRCAPNSFGLAPTNPQGCIP) enclose the Laminin EGF-like 3; truncated domain. Residues 721-730 (CFCSGVTQQC) enclose the Laminin EGF-like 4; first part domain. Residues 740–921 (VSIDYARGDR…QGLTAAEVEQ (182 aa)) enclose the Laminin IV type A 2 domain. Residues 922 to 954 (CICPPGYVGTSCEDCAPGYSRTGGGLYLGLCEK) enclose the Laminin EGF-like 4; second part domain. Cystine bridges form between C955–C964, C957–C971, C974–C983, C986–C1002, C1011–C1021, C1013–C1027, C1030–C1039, C1042–C1058, C1061–C1069, C1063–C1079, C1082–C1091, C1094–C1109, C1152–C1200, C1247–C1294, and C1338–C1384. 3 consecutive Laminin EGF-like domains span residues 955–1004 (CECN…DCQP), 1011–1060 (CHCN…DCTP), and 1061–1111 (CPCP…VCEP). Ig-like C2-type domains lie at 1126 to 1222 (PHEV…KRIS), 1226 to 1311 (PQPV…AVLE), 1319 to 1401 (PKVD…EPVQ), 1410 to 1499 (PQRG…ARLN), 1503 to 1585 (PQAI…RPVE), 1588 to 1680 (PARV…TPAT), 1690 to 1785 (PQVE…STLN), 1793 to 1878 (PRPV…VRLE), 1886 to 1970 (PTAV…GNVN), 1973 to 2069 (PSLT…IYIE), 2073 to 2163 (PSRI…AVHV), 2173 to 2260 (PKVE…TAVS), 2263 to 2343 (QQDK…GFVT), 2349 to 2435 (PDTI…RTVL), and 2446 to 2530 (TFTV…VDLQ). Positions 1388 to 1400 (DPSDNTPLQSEPV) are enriched in polar residues. 2 disordered regions span residues 1388–1426 (DPSD…QTVN) and 1478–1497 (EYEC…PPAR). N1422 carries N-linked (GlcNAc...) asparagine glycosylation. 4 disulfides stabilise this stretch: C1435–C1481, C1527–C1573, C1618–C1663, and C1719–C1767. Polar residues predominate over residues 1481–1497 (CTSTEPDGSTQLSPPAR). Positions 1773-1792 (NSPPVKTNPSTLNVTPEGTP) are disordered. Residues 1776-1788 (PVKTNPSTLNVTP) are compositionally biased toward polar residues. 15 disulfide bridges follow: C1814–C1861, C1907–C1954, C1998–C2053, C2099–C2147, C2195–C2242, C2284–C2329, C2374–C2420, C2467–C2514, C2713–C2725, C2719–C2736, C2738–C2747, C2754–C2764, C2759–C2773, C2775–C2784, and C2935–C2960. Residues 1880–1918 (TEDQEPPTAVVEPRTWNGKPGERHQFRCITTGSPTPKIT) are disordered. The span at 1907–1918 (CITTGSPTPKIT) shows a compositional bias: polar residues. The N-linked (GlcNAc...) asparagine glycan is linked to N2476. Positions 2532 to 2713 (DDFIPVIDGE…PSSVVKYDAC (182 aa)) constitute a Laminin G-like 1 domain. Residues 2793 to 2960 (PLGFTSDTSF…LSSSGDISSC (168 aa)) form the Laminin G-like 2 domain. N2950 carries N-linked (GlcNAc...) asparagine glycosylation. Positions 2952–2963 (SSSGDISSCEES) are enriched in low complexity. The tract at residues 2952 to 3124 (SSSGDISSCE…GTLPPDSSSE (173 aa)) is disordered. 2 stretches are compositionally biased toward acidic residues: residues 2979-2990 (EEPEAVIEEPTT) and 2999-3010 (PITEEPTEEPTT). Residues 3011–3033 (TEEPTTTEEPTTTTEEPTTTTTE) show a composition bias toward low complexity. A compositionally biased stretch (basic and acidic residues) spans 3034 to 3044 (EPYHIYETSRD). Low complexity predominate over residues 3049 to 3079 (IIIPVETTTTSTTTTSTTEEPEAEPALVLPT). The segment covering 3081-3094 (PVEENDVSDEEEEI) has biased composition (acidic residues). 4 disulfides stabilise this stretch: C3141–C3152, C3146–C3162, C3164–C3173, and C3333–C3359. N-linked (GlcNAc...) asparagine glycosylation is found at N3143 and N3156. The Laminin G-like 3 domain occupies 3180 to 3359 (EHAARFDGDA…AIDGKNVKPC (180 aa)).

Component of an integrin containing attachment complex, composed of at least pat-2, pat-3, pat-4, pat-6, unc-52, unc-97 and unc-112. As to expression, detected on embryonic and adult body wall muscle cells (at protein level). Found in the basement membrane of all contractile tissues (at protein level). Expressed in gonadal sheath cells and spermatheca.

It localises to the secreted. Its subcellular location is the extracellular space. The protein resides in the extracellular matrix. It is found in the basement membrane. The protein localises to the cytoplasm. It localises to the myofibril. Its subcellular location is the sarcomere. The protein resides in the m line. Functionally, component of an integrin containing attachment complex, which is required for muscle development and maintenance. Probable structural role in myofilament assembly and/or attachment of the myofilament lattice to the cell membrane. May be an extracellular anchor for integrin receptors in body wall muscles and myoepithelial sheath cells. During the formation of neuromuscular junctions at the larval stage, negatively regulates membrane protrusion from body wall muscles, probably downstream of the integrin complex formed by pat-2 and pat-3. Involved in ovulation. Required for normal lifespan. The polypeptide is Basement membrane proteoglycan (Caenorhabditis elegans).